Consider the following 181-residue polypeptide: Probable pyruvoyl-dependent arginine decarboxylase (181 aa).

At S43 the chain carries Pyruvic acid (Ser).

The protein belongs to the PdaD family. Pyruvate is required as a cofactor.

The enzyme catalyses L-arginine + H(+) = agmatine + CO2. This chain is Probable pyruvoyl-dependent arginine decarboxylase, found in Chlorobium phaeovibrioides (strain DSM 265 / 1930) (Prosthecochloris vibrioformis (strain DSM 265)).